The following is a 270-amino-acid chain: tRNA (guanine-N(1)-)-methyltransferase (270 aa).

Residues G119 and 139-144 contribute to the S-adenosyl-L-methionine site; that span reads IGDYVI.

The protein belongs to the RNA methyltransferase TrmD family. As to quaternary structure, homodimer.

The protein resides in the cytoplasm. It catalyses the reaction guanosine(37) in tRNA + S-adenosyl-L-methionine = N(1)-methylguanosine(37) in tRNA + S-adenosyl-L-homocysteine + H(+). In terms of biological role, specifically methylates guanosine-37 in various tRNAs. The protein is tRNA (guanine-N(1)-)-methyltransferase of Nitrosomonas europaea (strain ATCC 19718 / CIP 103999 / KCTC 2705 / NBRC 14298).